The primary structure comprises 380 residues: Cytochrome b (380 aa).

The next 4 helical transmembrane spans lie at 33-53, 77-98, 113-133, and 178-198; these read FGSLLGLCLMIQILTGLFLAM, WLIRYMHANGASMFFICLFLHV, WNMGIVLLFAVMATAFMGYVL, and FFAFHFILPFIITALVLVHLL. Residues histidine 83 and histidine 97 each coordinate heme b. 2 residues coordinate heme b: histidine 182 and histidine 196. Histidine 201 lines the a ubiquinone pocket. 4 helical membrane-spanning segments follow: residues 226–246, 288–308, 320–340, and 347–367; these read IKDLLGALLLLTALMILVLFF, LGGVLALILSILILAFMPLLH, ITQTMYWILVSDLLILTWIGG, and FIMIGQVASITYFAIIVIFMP.

It belongs to the cytochrome b family. As to quaternary structure, the cytochrome bc1 complex contains 11 subunits: 3 respiratory subunits (MT-CYB, CYC1 and UQCRFS1), 2 core proteins (UQCRC1 and UQCRC2) and 6 low-molecular weight proteins (UQCRH/QCR6, UQCRB/QCR7, UQCRQ/QCR8, UQCR10/QCR9, UQCR11/QCR10 and a cleavage product of UQCRFS1). This cytochrome bc1 complex then forms a dimer. The cofactor is heme b.

It localises to the mitochondrion inner membrane. Component of the ubiquinol-cytochrome c reductase complex (complex III or cytochrome b-c1 complex) that is part of the mitochondrial respiratory chain. The b-c1 complex mediates electron transfer from ubiquinol to cytochrome c. Contributes to the generation of a proton gradient across the mitochondrial membrane that is then used for ATP synthesis. This is Cytochrome b (MT-CYB) from Synaptomys borealis (Northern bog lemming).